We begin with the raw amino-acid sequence, 753 residues long: LON peptidase N-terminal domain and RING finger protein 3 (753 aa).

The segment at 17–57 is disordered; the sequence is GSNNLELAEPEEPGTSAAAGQSAAHPEEVTPEGSQALGAQE. One copy of the TPR 1 repeat lies at 72–105; the sequence is CKVLLTQADALASEGHLREALEVYRQLSERQQLV. An RING-type 1 zinc finger spans residues 159-197; that stretch reads CKKCHGFLSDPVSLWCGHTFCKLCLERGRAADRRCALCG. TPR repeat units lie at residues 244–277, 279–311, and 313–345; these read ASQL…APND, LLYS…RPMG, and KAHF…DGKN. The interval 351–450 is disordered; that stretch reads EAQRENLELP…QGAKPDLSNP (100 aa). The span at 363 to 382 shows a compositional bias: low complexity; it reads SNQEGAAAAEESSSLANSAQ. Residues 386–413 are compositionally biased toward basic and acidic residues; the sequence is SSKEDRKKDQEGEDRDAASVRTGKCQEK. The RING-type 2 zinc-finger motif lies at 461 to 499; the sequence is CSLCMRLFYEPVTTPCGHTFCLKCLERCLDHNAKCPLCK. The region spanning 540-749 is the Lon N-terminal domain; that stretch reads MEELSNLNKN…GIRRILAFIS (210 aa).

This Mus musculus (Mouse) protein is LON peptidase N-terminal domain and RING finger protein 3 (Lonrf3).